Reading from the N-terminus, the 198-residue chain is Small ribosomal subunit protein uS7 (198 aa).

This sequence belongs to the universal ribosomal protein uS7 family. Part of the 30S ribosomal subunit.

One of the primary rRNA binding proteins, it binds directly to 16S rRNA where it nucleates assembly of the head domain of the 30S subunit. Is located at the subunit interface close to the decoding center. The protein is Small ribosomal subunit protein uS7 of Desulfurococcus amylolyticus (strain DSM 18924 / JCM 16383 / VKM B-2413 / 1221n) (Desulfurococcus kamchatkensis).